Reading from the N-terminus, the 448-residue chain is Tubulin beta-1 chain (448 aa).

Gln-11, Glu-69, Ser-138, Gly-142, Thr-143, Gly-144, Asn-204, and Asn-226 together coordinate GTP. Residue Glu-69 coordinates Mg(2+). The disordered stretch occupies residues 427–448 (DATADEEGDLQEGESEYIEQEE). Over residues 429-448 (TADEEGDLQEGESEYIEQEE) the composition is skewed to acidic residues.

Belongs to the tubulin family. As to quaternary structure, dimer of alpha and beta chains. A typical microtubule is a hollow water-filled tube with an outer diameter of 25 nm and an inner diameter of 15 nM. Alpha-beta heterodimers associate head-to-tail to form protofilaments running lengthwise along the microtubule wall with the beta-tubulin subunit facing the microtubule plus end conferring a structural polarity. Microtubules usually have 13 protofilaments but different protofilament numbers can be found in some organisms and specialized cells. It depends on Mg(2+) as a cofactor.

It is found in the cytoplasm. It localises to the cytoskeleton. Tubulin is the major constituent of microtubules, a cylinder consisting of laterally associated linear protofilaments composed of alpha- and beta-tubulin heterodimers. Microtubules grow by the addition of GTP-tubulin dimers to the microtubule end, where a stabilizing cap forms. Below the cap, tubulin dimers are in GDP-bound state, owing to GTPase activity of alpha-tubulin. In Brugia pahangi (Filarial nematode worm), this protein is Tubulin beta-1 chain.